We begin with the raw amino-acid sequence, 387 residues long: Probable NADH-dependent butanol dehydrogenase 1 (387 aa).

The protein belongs to the iron-containing alcohol dehydrogenase family.

Its pathway is alcohol metabolism; butanol biosynthesis. The sequence is that of Probable NADH-dependent butanol dehydrogenase 1 (yugJ) from Bacillus subtilis (strain 168).